A 283-amino-acid chain; its full sequence is MYIAHTIDELRSHLAAFRRPAFVPTMGNLHEGHLALVKQAKPLGDVTVASIFVNRLQFLPHEDFDTYPRTWDSDCEKLRTAGCGVLFAPDEKALYPEPQTCKVHPDPALADILEGHFRPGFFVGVCTVVMKLFQCVQPRVAVFGKKDYQQLMMIRHMVRQFALPIEIVGSETFRADDGLALSSRNGYLSEAERAEAVQLSKALKAMAQAVQAGERDLAAIEARAMQALAQRGWQPDYLVLRRRSDLQAPSSANLAGEPLVALAAARLGGTRLIDNLEIDAMPS.

Position 26 to 33 (26 to 33) interacts with ATP; that stretch reads MGNLHEGH. His-33 functions as the Proton donor in the catalytic mechanism. Gln-57 lines the (R)-pantoate pocket. Gln-57 contributes to the beta-alanine binding site. Position 144-147 (144-147) interacts with ATP; it reads GKKD. Residue Gln-150 participates in (R)-pantoate binding. 181–184 is a binding site for ATP; that stretch reads LSSR.

Belongs to the pantothenate synthetase family. As to quaternary structure, homodimer.

It localises to the cytoplasm. The catalysed reaction is (R)-pantoate + beta-alanine + ATP = (R)-pantothenate + AMP + diphosphate + H(+). Its pathway is cofactor biosynthesis; (R)-pantothenate biosynthesis; (R)-pantothenate from (R)-pantoate and beta-alanine: step 1/1. Its function is as follows. Catalyzes the condensation of pantoate with beta-alanine in an ATP-dependent reaction via a pantoyl-adenylate intermediate. This Variovorax paradoxus (strain S110) protein is Pantothenate synthetase.